Reading from the N-terminus, the 67-residue chain is Conotoxin Cl6.8 (67 aa).

The signal sequence occupies residues 1–22 (MKVTAVLMVAVLVLTACQLTTA). A propeptide spanning residues 23–39 (NTTDYVRRILARKSTMS) is cleaved from the precursor. Cystine bridges form between Cys-43/Cys-58, Cys-50/Cys-62, and Cys-57/Cys-66. At Cys-66 the chain carries Cysteine amide.

This sequence belongs to the conotoxin O1 superfamily. In terms of tissue distribution, expressed by the venom duct.

The protein resides in the secreted. In Californiconus californicus (California cone), this protein is Conotoxin Cl6.8.